The following is a 37-amino-acid chain: Protease 2 large chain (37 aa).

Positions 1–14 (NDGNGRDSDPHDPG) are enriched in basic and acidic residues. Residues 1–37 (NDGNGRDSDPHDPGDWTTAGQCGLWQPARNSQHWTLV) form a disordered region. Residues 28 to 37 (ARNSQHWTLV) are compositionally biased toward polar residues.

It belongs to the peptidase S8 family. In terms of assembly, heterodimer of a large and a small chain.

Its subcellular location is the secreted. This is Protease 2 large chain from Achromobacter lyticus.